A 493-amino-acid polypeptide reads, in one-letter code: Glutamyl-tRNA(Gln) amidotransferase subunit A (493 aa).

Active-site charge relay system residues include lysine 81 and serine 156. Residue serine 180 is the Acyl-ester intermediate of the active site.

Belongs to the amidase family. GatA subfamily. Heterotrimer of A, B and C subunits.

The catalysed reaction is L-glutamyl-tRNA(Gln) + L-glutamine + ATP + H2O = L-glutaminyl-tRNA(Gln) + L-glutamate + ADP + phosphate + H(+). Functionally, allows the formation of correctly charged Gln-tRNA(Gln) through the transamidation of misacylated Glu-tRNA(Gln) in organisms which lack glutaminyl-tRNA synthetase. The reaction takes place in the presence of glutamine and ATP through an activated gamma-phospho-Glu-tRNA(Gln). The polypeptide is Glutamyl-tRNA(Gln) amidotransferase subunit A (Mycobacterium avium (strain 104)).